The following is a 1155-amino-acid chain: uncharacterized protein (1155 aa).

The signal sequence occupies residues 1–19 (MKKNIFITSLLILLLLLSS). Cysteine 20 is lipidated: N-palmitoyl cysteine. Cysteine 20 carries S-diacylglycerol cysteine lipidation. Transmembrane regions (helical) follow at residues 289 to 309 (ISVS…FLIG), 395 to 415 (LGFI…FLIF), 424 to 444 (ALIT…FMLF), and 459 to 479 (ISYA…SMII).

This sequence belongs to the TrbL/VirB6 family.

It localises to the cell membrane. This is an uncharacterized protein from Rickettsia prowazekii (strain Madrid E).